The sequence spans 217 residues: tRNA (guanine-N(7)-)-methyltransferase (217 aa).

The S-adenosyl-L-methionine site is built by Glu-44, Glu-69, Asn-96, and Asp-118. Asp-118 is a catalytic residue. Substrate is bound at residue Lys-122. The segment at 124–129 (RHEKRR) is interaction with RNA. Residues Asp-154 and 191–194 (TEYE) each bind substrate.

The protein belongs to the class I-like SAM-binding methyltransferase superfamily. TrmB family.

It carries out the reaction guanosine(46) in tRNA + S-adenosyl-L-methionine = N(7)-methylguanosine(46) in tRNA + S-adenosyl-L-homocysteine. Its pathway is tRNA modification; N(7)-methylguanine-tRNA biosynthesis. Its function is as follows. Catalyzes the formation of N(7)-methylguanine at position 46 (m7G46) in tRNA. The chain is tRNA (guanine-N(7)-)-methyltransferase from Geobacillus kaustophilus (strain HTA426).